A 523-amino-acid polypeptide reads, in one-letter code: Flavin-dependent halogenase armH5 (523 aa).

Positions 17, 20, and 50 each coordinate FAD. Chloride is bound by residues S328 and G329. Position 330 (V330) interacts with FAD.

This sequence belongs to the flavin-dependent halogenase family.

It catalyses the reaction melleolide F + FADH2 + chloride + O2 = 6'-chloromelleolide F + FAD + 2 H2O + H(+). Flavin-dependent halogenase involved in the biosynthesis of melleolides, a range of antifungal and phytotoxic polyketide derivatives composed of an orsellinic acid (OA) moiety esterified to various sesquiterpene alcohols. The halogenase catalyzes the transfer of a single chlorine atom to the melleolide backbone, resulting in a 6'-chloromelleolide product. The enzyme acts on free substrate and does not depend on carrier-protein-dependent acceptor molecules. This Armillaria mellea (Honey mushroom) protein is Flavin-dependent halogenase armH5.